Consider the following 238-residue polypeptide: Ribonuclease PH (238 aa).

Phosphate contacts are provided by residues R86 and 124-126 (GTR).

It belongs to the RNase PH family. Homohexameric ring arranged as a trimer of dimers.

The enzyme catalyses tRNA(n+1) + phosphate = tRNA(n) + a ribonucleoside 5'-diphosphate. Phosphorolytic 3'-5' exoribonuclease that plays an important role in tRNA 3'-end maturation. Removes nucleotide residues following the 3'-CCA terminus of tRNAs; can also add nucleotides to the ends of RNA molecules by using nucleoside diphosphates as substrates, but this may not be physiologically important. Probably plays a role in initiation of 16S rRNA degradation (leading to ribosome degradation) during starvation. The protein is Ribonuclease PH of Haemophilus ducreyi (strain 35000HP / ATCC 700724).